The following is a 150-amino-acid chain: Oleosin Ara h 10.0102 (150 aa).

The next 2 helical transmembrane spans lie at 39–59 and 73–93; these read VIAV…AGLA and LFIL…LSVA.

This sequence belongs to the oleosin family. As to expression, expressed in seeds (at protein level).

It is found in the lipid droplet. The protein resides in the membrane. Functionally, may have a structural role to stabilize the lipid body during desiccation of the seed by preventing coalescence of the oil. Probably interacts with both lipid and phospholipid moieties of lipid bodies. May also provide recognition signals for specific lipase anchorage in lipolysis during seedling growth. The sequence is that of Oleosin Ara h 10.0102 from Arachis hypogaea (Peanut).